A 252-amino-acid polypeptide reads, in one-letter code: Cell division protein ZapD (252 aa).

The protein belongs to the ZapD family. Interacts with FtsZ.

It localises to the cytoplasm. Functionally, cell division factor that enhances FtsZ-ring assembly. Directly interacts with FtsZ and promotes bundling of FtsZ protofilaments, with a reduction in FtsZ GTPase activity. The protein is Cell division protein ZapD of Ralstonia pickettii (strain 12J).